We begin with the raw amino-acid sequence, 201 residues long: Putative amino-acid transporter Mb0498 (201 aa).

Transmembrane regions (helical) follow at residues 25-45 (VLVIVALCGIADGALIAAGVG), 57-77 (MTLVARFGGAAFLIGYALLAA), 104-124 (LVVTFLNPHVYLDTVVLIGAL), 133-153 (WFFGAGAWAASVVWFAVLGFS), and 169-189 (ILDALVAVTMIGVAVVVLVTS).

The protein belongs to the LysE/ArgO transporter (TC 2.A.75) family.

It localises to the cell membrane. This Mycobacterium bovis (strain ATCC BAA-935 / AF2122/97) protein is Putative amino-acid transporter Mb0498.